The primary structure comprises 230 residues: MSKKRGLSLEEKREKMLQIFYESQDFFLLKELEKMGPKKGVISQSVKDVIQSLVDDDLVAKDKIGISIYFWSLPSCAGNQLRSVRQKLESDLQGSNKRLAELVDQCEALKKGREESEERTEALTQLKDIEKKHKDLKNEMVQFADNDPATLEAKRNAIEVAHQSANRWTDNIFTLRQWCSNNFPQAKEQLEHLYTEAGITEDFDYIELSSFPLSSSHEADTAKQLVQDEA.

Positions 79-146 (NQLRSVRQKL…KNEMVQFADN (68 aa)) form a coiled coil.

The protein belongs to the MND1 family. Interacts with HOP2, RAD51, LIM15 and MIP1. As to expression, expressed in reproductive tissues.

The protein localises to the nucleus. The protein resides in the nucleolus. Functionally, required for proper homologous chromosome pairing and efficient cross-over and intragenic recombination during meiosis. Stimulates both DMC1/LIM15- and RAD51-mediated homologous strand assimilation, which is required for the resolution of meiotic double-strand breaks. This chain is Meiotic nuclear division protein 1 homolog (MND1), found in Arabidopsis thaliana (Mouse-ear cress).